The sequence spans 115 residues: Movement protein TGB2 (115 aa).

At 1–13 (MSAQGHRLTAPVN) the chain is on the cytoplasmic side. Residues 14 to 34 (SEKVYIVLGLSFALVSITFLL) traverse the membrane as a helical segment. Over 35–74 (SRNSLPHVGDNIHSLPHGGAYRDGTKAILYNSPNLGSRVS) the chain is Lumenal. Residues 75–95 (LHNGKNAAFAAVLLLTLLIYG) form a helical membrane-spanning segment. At 96-115 (SKYISQRNHTCACGNNHSSH) the chain is on the cytoplasmic side.

It belongs to the Tymovirales TGBp2 protein family.

The protein resides in the host endoplasmic reticulum membrane. Its function is as follows. Plays a role in viral cell-to-cell propagation, by facilitating genome transport to neighboring plant cells through plasmosdesmata,. The chain is Movement protein TGB2 from Potato virus X (PVX).